The primary structure comprises 186 residues: Elongation factor P (186 aa).

The protein belongs to the elongation factor P family.

The protein resides in the cytoplasm. It functions in the pathway protein biosynthesis; polypeptide chain elongation. Involved in peptide bond synthesis. Stimulates efficient translation and peptide-bond synthesis on native or reconstituted 70S ribosomes in vitro. Probably functions indirectly by altering the affinity of the ribosome for aminoacyl-tRNA, thus increasing their reactivity as acceptors for peptidyl transferase. In Shewanella baltica (strain OS223), this protein is Elongation factor P.